Here is a 229-residue protein sequence, read N- to C-terminus: 3-dehydroquinate dehydratase (229 aa).

3-dehydroquinate-binding positions include 29 to 31 (ELR) and arginine 56. Histidine 120 acts as the Proton donor/acceptor in catalysis. The active-site Schiff-base intermediate with substrate is lysine 146. 3 residues coordinate 3-dehydroquinate: arginine 187, threonine 208, and glutamine 212.

This sequence belongs to the type-I 3-dehydroquinase family. In terms of assembly, homodimer.

It carries out the reaction 3-dehydroquinate = 3-dehydroshikimate + H2O. It participates in metabolic intermediate biosynthesis; chorismate biosynthesis; chorismate from D-erythrose 4-phosphate and phosphoenolpyruvate: step 3/7. Functionally, involved in the third step of the chorismate pathway, which leads to the biosynthesis of aromatic amino acids. Catalyzes the cis-dehydration of 3-dehydroquinate (DHQ) and introduces the first double bond of the aromatic ring to yield 3-dehydroshikimate. The sequence is that of 3-dehydroquinate dehydratase from Haloarcula marismortui (strain ATCC 43049 / DSM 3752 / JCM 8966 / VKM B-1809) (Halobacterium marismortui).